A 311-amino-acid chain; its full sequence is Maspardin (311 aa).

The 74-residue stretch at Glu86–Met159 folds into the AB hydrolase-1 domain.

The protein belongs to the AB hydrolase superfamily.

Its subcellular location is the cytoplasm. This is Maspardin (spg21) from Danio rerio (Zebrafish).